The chain runs to 691 residues: DNA ligase (691 aa).

Residues 41–45 (DAEYD), 90–91 (SL), and Glu130 contribute to the NAD(+) site. The active-site N6-AMP-lysine intermediate is Lys132. Residues Arg153, Glu190, Lys307, and Lys331 each contribute to the NAD(+) site. Positions 425, 428, 443, and 449 each coordinate Zn(2+). In terms of domain architecture, BRCT spans 610-691 (APQGVLAGKT…MHTLLEGHAR (82 aa)).

This sequence belongs to the NAD-dependent DNA ligase family. LigA subfamily. It depends on Mg(2+) as a cofactor. The cofactor is Mn(2+).

It carries out the reaction NAD(+) + (deoxyribonucleotide)n-3'-hydroxyl + 5'-phospho-(deoxyribonucleotide)m = (deoxyribonucleotide)n+m + AMP + beta-nicotinamide D-nucleotide.. Its function is as follows. DNA ligase that catalyzes the formation of phosphodiester linkages between 5'-phosphoryl and 3'-hydroxyl groups in double-stranded DNA using NAD as a coenzyme and as the energy source for the reaction. It is essential for DNA replication and repair of damaged DNA. This chain is DNA ligase, found in Burkholderia mallei (strain NCTC 10247).